The chain runs to 95 residues: Integration host factor subunit beta (95 aa).

Belongs to the bacterial histone-like protein family. Heterodimer of an alpha and a beta chain.

In terms of biological role, this protein is one of the two subunits of integration host factor, a specific DNA-binding protein that functions in genetic recombination as well as in transcriptional and translational control. The protein is Integration host factor subunit beta of Shewanella putrefaciens (strain CN-32 / ATCC BAA-453).